The chain runs to 461 residues: MANKSMETIVSLAKHRGFVFPGSEIYGGLANTWDYGPLGVELKNNIKKAWWQKFVQESEHNVGIDAAILMNPKAWVASGHVGNFNDPMIDCKSCKARHRADKIIEDAALAKGDEIIVDGMTFDQMKETMIKYDVVCPDCGKADFTDIRQFNLMFKTFQGVTESSTNEIFLRPETAQGIFVNFKNVQRSMRKRTPFGIAQIGKSFRNEITPGNFTFRTREFEQMELEFFCKPGEDLEWHSYWKEFCKNWLLNLGMKEDSMRLRDHEDDELSHYSNATTDIEFKFPFGWGELWGIADRTDYDLKQHMEHSGEDFTYIDPVSNDRYIPYCIEPSLGADRVTLAFLCDAYDEEELEGDDKRTVLRFHPAIAPFKAAVLPLSKKLSDEATDVWAELRKAFPVDFDESQSIGKRYRRQDEIGTPFCITYDFDSKEDGQVTVRHRDSMTQERMPISEVKAYIEKHLQF.

Substrate contacts are provided by R99 and E173. Residues 205-207 (RNE), 215-220 (FRTREF), 289-290 (EL), and 333-336 (GADR) contribute to the ATP site. 220–224 (FEQME) serves as a coordination point for substrate. 329–333 (EPSLG) provides a ligand contact to substrate.

It belongs to the class-II aminoacyl-tRNA synthetase family. Homodimer.

It localises to the cytoplasm. It carries out the reaction tRNA(Gly) + glycine + ATP = glycyl-tRNA(Gly) + AMP + diphosphate. Functionally, catalyzes the attachment of glycine to tRNA(Gly). This is Glycine--tRNA ligase from Lysinibacillus sphaericus (strain C3-41).